We begin with the raw amino-acid sequence, 178 residues long: Large ribosomal subunit protein uL6 (178 aa).

The protein belongs to the universal ribosomal protein uL6 family. In terms of assembly, part of the 50S ribosomal subunit.

Functionally, this protein binds to the 23S rRNA, and is important in its secondary structure. It is located near the subunit interface in the base of the L7/L12 stalk, and near the tRNA binding site of the peptidyltransferase center. This Desulfatibacillum aliphaticivorans protein is Large ribosomal subunit protein uL6.